Here is a 371-residue protein sequence, read N- to C-terminus: Bifunctional enzyme IspD/IspF (371 aa).

A 2-C-methyl-D-erythritol 4-phosphate cytidylyltransferase region spans residues 1-212; the sequence is MKDITLVLLA…FDFTPASGTI (212 aa). The segment at 213-371 is 2-C-methyl-D-erythritol 2,4-cyclodiphosphate synthase; that stretch reads FTGNGFDVHA…NLGYFDWRKF (159 aa). Residues D219 and H221 each coordinate a divalent metal cation. 4-CDP-2-C-methyl-D-erythritol 2-phosphate is bound by residues 219-221 and 245-246; these read DVH and HS. H253 is a binding site for a divalent metal cation. Residues 267–269, 272–276, 341–344, F348, and R351 each bind 4-CDP-2-C-methyl-D-erythritol 2-phosphate; these read DIG, FPDTD, and STTE.

It in the N-terminal section; belongs to the IspD/TarI cytidylyltransferase family. IspD subfamily. The protein in the C-terminal section; belongs to the IspF family. A divalent metal cation is required as a cofactor.

It carries out the reaction 2-C-methyl-D-erythritol 4-phosphate + CTP + H(+) = 4-CDP-2-C-methyl-D-erythritol + diphosphate. The enzyme catalyses 4-CDP-2-C-methyl-D-erythritol 2-phosphate = 2-C-methyl-D-erythritol 2,4-cyclic diphosphate + CMP. The protein operates within isoprenoid biosynthesis; isopentenyl diphosphate biosynthesis via DXP pathway; isopentenyl diphosphate from 1-deoxy-D-xylulose 5-phosphate: step 2/6. Its pathway is isoprenoid biosynthesis; isopentenyl diphosphate biosynthesis via DXP pathway; isopentenyl diphosphate from 1-deoxy-D-xylulose 5-phosphate: step 4/6. In terms of biological role, bifunctional enzyme that catalyzes the formation of 4-diphosphocytidyl-2-C-methyl-D-erythritol from CTP and 2-C-methyl-D-erythritol 4-phosphate (MEP) (IspD), and catalyzes the conversion of 4-diphosphocytidyl-2-C-methyl-D-erythritol 2-phosphate (CDP-ME2P) to 2-C-methyl-D-erythritol 2,4-cyclodiphosphate (ME-CPP) with a corresponding release of cytidine 5-monophosphate (CMP) (IspF). This is Bifunctional enzyme IspD/IspF from Campylobacter hominis (strain ATCC BAA-381 / DSM 21671 / CCUG 45161 / LMG 19568 / NCTC 13146 / CH001A).